Here is a 1898-residue protein sequence, read N- to C-terminus: Receptor-type tyrosine-protein phosphatase F (1898 aa).

Positions 1–29 (MTPEPAPGRTMVPLVPALVMLGLVAGAHG) are cleaved as a signal peptide. Residues 30–1254 (DSKPVFVKVP…QQQEEPELLW (1225 aa)) lie on the Extracellular side of the membrane. Ig-like C2-type domains are found at residues 33–123 (PVFV…AKLS), 135–224 (PSID…ANLY), and 232–314 (PRFS…AQVT). An intrachain disulfide couples C54 to C107. A heparin-binding site is contributed by 68–77 (KKGKKVSSQR). A glycan (N-linked (GlcNAc...) asparagine) is linked at N117. A disulfide bond links C156 and C207. Residues N250 and N295 are each glycosylated (N-linked (GlcNAc...) asparagine). C253 and C298 are disulfide-bonded. 8 Fibronectin type-III domains span residues 321–411 (PPID…TGEQ), 416–510 (PPRR…TQQG), 514–604 (QPAD…TAQS), 609–706 (PPQK…TDED), 711–810 (PPRK…TTGA), 811–905 (VPGR…PEDV), 909–1001 (FPQN…TMPV), and 1005–1089 (FAKN…TAPD). The interval 399–418 (PPSEAVRARTGEQAPSSPPR) is disordered. Positions 693 to 713 (GPESSPVLVRTDEDVPSGPPR) are disordered. A glycan (N-linked (GlcNAc...) asparagine) is linked at N721. Residues N941 and N957 are each glycosylated (N-linked (GlcNAc...) asparagine). The helical transmembrane segment at 1255-1275 (VTGPVLAVILIVLIVIAILLF) threads the bilayer. Residues 1276–1898 (KRKRTHSPSS…YLGSFDHYAT (623 aa)) are Cytoplasmic-facing. Position 1296 is a phosphoserine (S1296). Tyrosine-protein phosphatase domains are found at residues 1343 to 1598 (FSQE…LLEA) and 1630 to 1889 (MELE…ALEY). Substrate-binding positions include D1507, 1539-1545 (CSAGVGR), and Q1583. C1539 serves as the catalytic Phosphocysteine intermediate. The Phosphocysteine intermediate role is filled by C1830.

The protein belongs to the protein-tyrosine phosphatase family. Receptor class 2A subfamily. In terms of assembly, interacts with GRIP1. Interacts with PPFIA1, PPFIA2 and PPFIA3. Interacts with INSR.

Its subcellular location is the membrane. The enzyme catalyses O-phospho-L-tyrosyl-[protein] + H2O = L-tyrosyl-[protein] + phosphate. Functionally, possible cell adhesion receptor. It possesses an intrinsic protein tyrosine phosphatase activity (PTPase) and dephosphorylates EPHA2 regulating its activity. In terms of biological role, the first PTPase domain has enzymatic activity, while the second one seems to affect the substrate specificity of the first one. The sequence is that of Receptor-type tyrosine-protein phosphatase F (PTPRF) from Bos taurus (Bovine).